Consider the following 156-residue polypeptide: Ribosomal RNA large subunit methyltransferase H (156 aa).

Residues L72 and G104 each coordinate S-adenosyl-L-methionine.

This sequence belongs to the RNA methyltransferase RlmH family. Homodimer.

The protein resides in the cytoplasm. It carries out the reaction pseudouridine(1915) in 23S rRNA + S-adenosyl-L-methionine = N(3)-methylpseudouridine(1915) in 23S rRNA + S-adenosyl-L-homocysteine + H(+). In terms of biological role, specifically methylates the pseudouridine at position 1915 (m3Psi1915) in 23S rRNA. This is Ribosomal RNA large subunit methyltransferase H from Maricaulis maris (strain MCS10) (Caulobacter maris).